Consider the following 158-residue polypeptide: Endoribonuclease YbeY (158 aa).

Residues His119, His123, and Asp129 each coordinate Zn(2+).

The protein belongs to the endoribonuclease YbeY family. The cofactor is Zn(2+).

The protein localises to the cytoplasm. In terms of biological role, single strand-specific metallo-endoribonuclease involved in late-stage 70S ribosome quality control and in maturation of the 3' terminus of the 16S rRNA. The protein is Endoribonuclease YbeY of Chlamydia caviae (strain ATCC VR-813 / DSM 19441 / 03DC25 / GPIC) (Chlamydophila caviae).